Reading from the N-terminus, the 379-residue chain is Forkhead box protein E1 (379 aa).

Polar residues predominate over residues 1-11 (MTAESQQSPTR). A disordered region spans residues 1-65 (MTAESQQSPT…RRRKRPLQKG (65 aa)). Basic residues predominate over residues 54–63 (KGRRRKRPLQ). Positions 66–160 (KPPYSYIALI…DSGSFLRRRK (95 aa)) form a DNA-binding region, fork-head. Positions 239–265 (HSGSEHAQPPNRSISPEVNSTSSSSCN) are disordered. Low complexity predominate over residues 251 to 265 (SISPEVNSTSSSSCN).

In terms of tissue distribution, first expressed at late neural tube and early tailbud stages in the hypophyseal placode. Expression continues in the developing pituitary at late tailbud stages. As development progresses, expressed in the mesoderm of the branchial arches. At stage 38, expressed in the developing thyroid and in the pharyngeal endoderm.

It localises to the nucleus. Its function is as follows. Transcription factor that binds consensus sites on a variety of gene promoters and activate their transcription. This is Forkhead box protein E1 from Xenopus laevis (African clawed frog).